The chain runs to 303 residues: Probable endonuclease 4 (303 aa).

The Zn(2+) site is built by H75, H115, E151, D185, H188, H221, D234, H236, and E266.

Belongs to the AP endonuclease 2 family. Zn(2+) serves as cofactor.

The enzyme catalyses Endonucleolytic cleavage to 5'-phosphooligonucleotide end-products.. Endonuclease IV plays a role in DNA repair. It cleaves phosphodiester bonds at apurinic or apyrimidinic (AP) sites, generating a 3'-hydroxyl group and a 5'-terminal sugar phosphate. This Ureaplasma parvum serovar 3 (strain ATCC 700970) protein is Probable endonuclease 4.